The chain runs to 272 residues: Glutamate racemase (272 aa).

Residues 10–11 and 42–43 each bind substrate; these read DS and YG. Residue cysteine 74 is the Proton donor/acceptor of the active site. 75–76 is a substrate binding site; that stretch reads NT. The active-site Proton donor/acceptor is cysteine 185. Residue 186-187 coordinates substrate; it reads TH.

Belongs to the aspartate/glutamate racemases family.

It carries out the reaction L-glutamate = D-glutamate. It functions in the pathway cell wall biogenesis; peptidoglycan biosynthesis. In terms of biological role, provides the (R)-glutamate required for cell wall biosynthesis. This chain is Glutamate racemase, found in Bacillus pumilus (strain SAFR-032).